Here is a 290-residue protein sequence, read N- to C-terminus: Nucleotide-binding protein XF_1405 (290 aa).

An ATP-binding site is contributed by 13–20 (GLSGSGKS). 65–68 (DIRS) lines the GTP pocket.

The protein belongs to the RapZ-like family.

In terms of biological role, displays ATPase and GTPase activities. In Xylella fastidiosa (strain 9a5c), this protein is Nucleotide-binding protein XF_1405.